The following is a 212-amino-acid chain: MQYDLYVVTDEGLSRGLTHPELARRAIAGSADVIQLRDKKCDCDYLLRCAMEMREDCNKAGVTFIVNDRLDVALQSQADGVHIGQSDMPLKFARRVAPKGFIIGVSAGTVEEALRAEHDGADYIGFGPVFPTGSKADAGPVCGLDLLREVRRRVSIPVVAIGGINAANAPEVLAAGADGLAVISAVVSQEDVTAAARNLKAIISQYRLSGRQ.

Residues 35 to 39 (QLRDK) and Asn-67 contribute to the 4-amino-2-methyl-5-(diphosphooxymethyl)pyrimidine site. Residues Asp-68 and Asp-87 each coordinate Mg(2+). Ser-106 contacts 4-amino-2-methyl-5-(diphosphooxymethyl)pyrimidine. 132–134 (TGS) is a 2-[(2R,5Z)-2-carboxy-4-methylthiazol-5(2H)-ylidene]ethyl phosphate binding site. Lys-135 is a binding site for 4-amino-2-methyl-5-(diphosphooxymethyl)pyrimidine. 2-[(2R,5Z)-2-carboxy-4-methylthiazol-5(2H)-ylidene]ethyl phosphate is bound by residues Gly-163 and 183–184 (IS).

This sequence belongs to the thiamine-phosphate synthase family. It depends on Mg(2+) as a cofactor.

The catalysed reaction is 2-[(2R,5Z)-2-carboxy-4-methylthiazol-5(2H)-ylidene]ethyl phosphate + 4-amino-2-methyl-5-(diphosphooxymethyl)pyrimidine + 2 H(+) = thiamine phosphate + CO2 + diphosphate. It catalyses the reaction 2-(2-carboxy-4-methylthiazol-5-yl)ethyl phosphate + 4-amino-2-methyl-5-(diphosphooxymethyl)pyrimidine + 2 H(+) = thiamine phosphate + CO2 + diphosphate. It carries out the reaction 4-methyl-5-(2-phosphooxyethyl)-thiazole + 4-amino-2-methyl-5-(diphosphooxymethyl)pyrimidine + H(+) = thiamine phosphate + diphosphate. It participates in cofactor biosynthesis; thiamine diphosphate biosynthesis; thiamine phosphate from 4-amino-2-methyl-5-diphosphomethylpyrimidine and 4-methyl-5-(2-phosphoethyl)-thiazole: step 1/1. In terms of biological role, condenses 4-methyl-5-(beta-hydroxyethyl)thiazole monophosphate (THZ-P) and 2-methyl-4-amino-5-hydroxymethyl pyrimidine pyrophosphate (HMP-PP) to form thiamine monophosphate (TMP). The sequence is that of Thiamine-phosphate synthase from Methanocella arvoryzae (strain DSM 22066 / NBRC 105507 / MRE50).